The following is a 129-amino-acid chain: Small ribosomal subunit protein uS11 (129 aa).

The protein belongs to the universal ribosomal protein uS11 family. As to quaternary structure, part of the 30S ribosomal subunit. Interacts with proteins S7 and S18. Binds to IF-3.

Functionally, located on the platform of the 30S subunit, it bridges several disparate RNA helices of the 16S rRNA. Forms part of the Shine-Dalgarno cleft in the 70S ribosome. This Idiomarina loihiensis (strain ATCC BAA-735 / DSM 15497 / L2-TR) protein is Small ribosomal subunit protein uS11.